A 68-amino-acid polypeptide reads, in one-letter code: Large ribosomal subunit protein bL32 (68 aa).

It belongs to the bacterial ribosomal protein bL32 family.

This is Large ribosomal subunit protein bL32 from Ruegeria pomeroyi (strain ATCC 700808 / DSM 15171 / DSS-3) (Silicibacter pomeroyi).